Reading from the N-terminus, the 316-residue chain is Methionyl-tRNA formyltransferase (316 aa).

Serine 112–proline 115 lines the (6S)-5,6,7,8-tetrahydrofolate pocket.

This sequence belongs to the Fmt family.

It carries out the reaction L-methionyl-tRNA(fMet) + (6R)-10-formyltetrahydrofolate = N-formyl-L-methionyl-tRNA(fMet) + (6S)-5,6,7,8-tetrahydrofolate + H(+). In terms of biological role, attaches a formyl group to the free amino group of methionyl-tRNA(fMet). The formyl group appears to play a dual role in the initiator identity of N-formylmethionyl-tRNA by promoting its recognition by IF2 and preventing the misappropriation of this tRNA by the elongation apparatus. The chain is Methionyl-tRNA formyltransferase from Actinobacillus pleuropneumoniae serotype 5b (strain L20).